A 338-amino-acid polypeptide reads, in one-letter code: MRSLLLLSIVFFVVTVSANKTRELCMKSLEHAKVDTSNEARQDGIDLYKHMFENYPPLRKYFKNREEYTAEDVQNDPFFAKQGQKILLACHVLCATYDDRETFNAYTRELLDRHARDHVHMPPEVWTDFWKLFEEYLGKKTTLDEPTKQAWHEIGREFAKEINKHGRHAVRHQCMRSLQHIDIGHSETAKQNGIDLYKHMFENYPSMREAFKDRENYTAEDVQKDPFFVKQGQRILLACHLLCASYDDEETFHMYVHELMERHERLGVQLPDQHWTDFWKLFEEFLEKKSHLCEHTKHAWAVIGKEFAYEATRHGKEHHEHKEEHKEEHKEEHKEEQH.

The N-terminal stretch at 1–18 (MRSLLLLSIVFFVVTVSA) is a signal peptide. Residue asparagine 19 is glycosylated (N-linked (GlcNAc...) asparagine). Globin domains lie at 25 to 167 (CMKS…KHGR) and 174 to 316 (CMRS…RHGK). Heme b is bound by residues glutamine 82 and histidine 114. N-linked (GlcNAc...) asparagine glycosylation is present at asparagine 216. Residues glutamine 231 and histidine 263 each coordinate heme b. The segment at 313-338 (RHGKEHHEHKEEHKEEHKEEHKEEQH) is disordered.

It belongs to the globin family. In terms of assembly, homooctamer.

It localises to the secreted. The protein localises to the extracellular space. Its function is as follows. Has an extremely high oxygen affinity. In a vacuum, it takes several minutes to release its oxygen compared to milliseconds for a normal globin. Could be used as an oxygen scavenger for sterol biosynthesis. The sequence is that of Extracellular globin from Ascaris suum (Pig roundworm).